A 166-amino-acid chain; its full sequence is T-cell surface glycoprotein CD3 zeta chain (166 aa).

Positions M1–A21 are cleaved as a signal peptide. Topologically, residues Q22–K30 are extracellular. The chain crosses the membrane as a helical span at residues L31–L51. Residues R52–R166 lie on the Cytoplasmic side of the membrane. A Phosphoserine modification is found at S58. ITAM domains follow at residues A61–R89, P100–M128, and Q133–Q161. Phosphotyrosine is present on residues Y64, Y72, Y83, Y111, Y123, Y144, and Y155. Residues I126–D156 are disordered.

Belongs to the CD3Z/FCER1G family. The TCR-CD3 complex is composed of a CD3D/CD3E and a CD3G/CD3E heterodimers that preferentially associate with TCRalpha and TCRbeta, respectively, to form TCRalpha/CD3E/CD3G and TCRbeta/CD3G/CD3E trimers. In turn, the hexamer interacts with CD3Z homodimer to form the TCR-CD3 complex. Alternatively, TCRalpha and TCRbeta can be replaced by TCRgamma and TCRdelta. Interacts with SLA. Interacts with TRAT1. Interacts with DOCK2. Interacts with SLA2. Interacts with SHB. Interacts with ZAP70. Interacts (tyrosine phosphorylated) with SHC1 (via SH2 domain). Interacts with PTPRC. Interacts with CRK; this interaction regulates CD3Z phosphorylation. Interacts (on T cell side) with CD81, ICAM1 and CD9 at immunological synapses between antigen-presenting cells and T cells. Interacts with CD160. Interacts with LY6E. Interacts with LY6E. The signaling subunit of immunoglobulin gamma (IgG) Fc receptor complex. As a homodimer or a heterodimer with FCER1G, associates with the ligand binding subunit FCGR3A (via transmembrane domain); this interaction is a prerequisite for Fc receptor complex expression on the cell surface. Interacts with CD5. Post-translationally, phosphorylated on Tyr residues after T-cell receptor triggering by LCK in association with CD4/CD8.

The protein resides in the cell membrane. Its function is as follows. Part of the TCR-CD3 complex present on T-lymphocyte cell surface that plays an essential role in adaptive immune response. When antigen presenting cells (APCs) activate T-cell receptor (TCR), TCR-mediated signals are transmitted across the cell membrane by the CD3 chains CD3D, CD3E, CD3G and CD3Z. All CD3 chains contain immunoreceptor tyrosine-based activation motifs (ITAMs) in their cytoplasmic domain. Upon TCR engagement, these motifs become phosphorylated by Src family protein tyrosine kinases LCK and FYN, resulting in the activation of downstream signaling pathways. CD3Z ITAMs phosphorylation creates multiple docking sites for the protein kinase ZAP70 leading to ZAP70 phosphorylation and its conversion into a catalytically active enzyme. Plays an important role in intrathymic T-cell differentiation. Additionally, participates in the activity-dependent synapse formation of retinal ganglion cells (RGCs) in both the retina and dorsal lateral geniculate nucleus (dLGN). In Ovis aries (Sheep), this protein is T-cell surface glycoprotein CD3 zeta chain (CD247).